Reading from the N-terminus, the 210-residue chain is MCLMVTLVEHPLVQHKLSLMRDERTGVKEFRELAGELSLLLAYEAMRDLEVEPVRFATPIEEGDFPMLSGKKLALVAILRAGLVMTDAIVTLVPAAKVGHIGMYRDPQSLAPVAYYSKLPADIAERRVFLTDPMLATGGSANAAIQNLKDAGAQSIKLMTILAAPEGIHAVQQAHPDVDIVTASVDSRLNDHGYIVPGLGDAGDRIYGTK.

Residues Arg-80, Arg-105, and 132 to 140 (DPMLATGGS) contribute to the 5-phospho-alpha-D-ribose 1-diphosphate site. Residues Ile-195 and 200–202 (GDA) contribute to the uracil site. Asp-201 contributes to the 5-phospho-alpha-D-ribose 1-diphosphate binding site.

The protein belongs to the UPRTase family. Mg(2+) is required as a cofactor.

It catalyses the reaction UMP + diphosphate = 5-phospho-alpha-D-ribose 1-diphosphate + uracil. The protein operates within pyrimidine metabolism; UMP biosynthesis via salvage pathway; UMP from uracil: step 1/1. Allosterically activated by GTP. In terms of biological role, catalyzes the conversion of uracil and 5-phospho-alpha-D-ribose 1-diphosphate (PRPP) to UMP and diphosphate. The protein is Uracil phosphoribosyltransferase of Deinococcus radiodurans (strain ATCC 13939 / DSM 20539 / JCM 16871 / CCUG 27074 / LMG 4051 / NBRC 15346 / NCIMB 9279 / VKM B-1422 / R1).